The chain runs to 273 residues: Elongation factor Ts (273 aa).

Positions 79–82 are involved in Mg(2+) ion dislocation from EF-Tu; that stretch reads TDFV.

The protein belongs to the EF-Ts family.

The protein resides in the cytoplasm. In terms of biological role, associates with the EF-Tu.GDP complex and induces the exchange of GDP to GTP. It remains bound to the aminoacyl-tRNA.EF-Tu.GTP complex up to the GTP hydrolysis stage on the ribosome. The sequence is that of Elongation factor Ts from Hydrogenobaculum sp. (strain Y04AAS1).